The primary structure comprises 79 residues: Metallothionein-like protein type 2 (79 aa).

Belongs to the metallothionein superfamily. Type 15 family.

Functionally, metallothioneins have a high content of cysteine residues that bind various heavy metals. This chain is Metallothionein-like protein type 2 (MT1), found in Malus domestica (Apple).